Consider the following 613-residue polypeptide: Dihydroxy-acid dehydratase (613 aa).

A Mg(2+)-binding site is contributed by D81. C122 contacts [2Fe-2S] cluster. Residues D123 and K124 each contribute to the Mg(2+) site. Position 124 is an N6-carboxylysine (K124). Position 193 (C193) interacts with [2Fe-2S] cluster. Residue E489 coordinates Mg(2+). S515 functions as the Proton acceptor in the catalytic mechanism.

Belongs to the IlvD/Edd family. In terms of assembly, homodimer. [2Fe-2S] cluster serves as cofactor. The cofactor is Mg(2+).

It carries out the reaction (2R)-2,3-dihydroxy-3-methylbutanoate = 3-methyl-2-oxobutanoate + H2O. The enzyme catalyses (2R,3R)-2,3-dihydroxy-3-methylpentanoate = (S)-3-methyl-2-oxopentanoate + H2O. Its pathway is amino-acid biosynthesis; L-isoleucine biosynthesis; L-isoleucine from 2-oxobutanoate: step 3/4. It functions in the pathway amino-acid biosynthesis; L-valine biosynthesis; L-valine from pyruvate: step 3/4. Functionally, functions in the biosynthesis of branched-chain amino acids. Catalyzes the dehydration of (2R,3R)-2,3-dihydroxy-3-methylpentanoate (2,3-dihydroxy-3-methylvalerate) into 2-oxo-3-methylpentanoate (2-oxo-3-methylvalerate) and of (2R)-2,3-dihydroxy-3-methylbutanoate (2,3-dihydroxyisovalerate) into 2-oxo-3-methylbutanoate (2-oxoisovalerate), the penultimate precursor to L-isoleucine and L-valine, respectively. This is Dihydroxy-acid dehydratase from Pseudomonas fluorescens (strain SBW25).